Reading from the N-terminus, the 557-residue chain is Dihydroxy-acid dehydratase (557 aa).

Mg(2+) is bound at residue aspartate 78. Cysteine 119 contacts [2Fe-2S] cluster. 2 residues coordinate Mg(2+): aspartate 120 and lysine 121. Lysine 121 carries the post-translational modification N6-carboxylysine. Cysteine 192 is a [2Fe-2S] cluster binding site. Position 446 (glutamate 446) interacts with Mg(2+). Serine 472 (proton acceptor) is an active-site residue.

It belongs to the IlvD/Edd family. Homodimer. [2Fe-2S] cluster is required as a cofactor. The cofactor is Mg(2+).

The catalysed reaction is (2R)-2,3-dihydroxy-3-methylbutanoate = 3-methyl-2-oxobutanoate + H2O. It carries out the reaction (2R,3R)-2,3-dihydroxy-3-methylpentanoate = (S)-3-methyl-2-oxopentanoate + H2O. The protein operates within amino-acid biosynthesis; L-isoleucine biosynthesis; L-isoleucine from 2-oxobutanoate: step 3/4. Its pathway is amino-acid biosynthesis; L-valine biosynthesis; L-valine from pyruvate: step 3/4. In terms of biological role, functions in the biosynthesis of branched-chain amino acids. Catalyzes the dehydration of (2R,3R)-2,3-dihydroxy-3-methylpentanoate (2,3-dihydroxy-3-methylvalerate) into 2-oxo-3-methylpentanoate (2-oxo-3-methylvalerate) and of (2R)-2,3-dihydroxy-3-methylbutanoate (2,3-dihydroxyisovalerate) into 2-oxo-3-methylbutanoate (2-oxoisovalerate), the penultimate precursor to L-isoleucine and L-valine, respectively. The protein is Dihydroxy-acid dehydratase of Campylobacter curvus (strain 525.92).